The primary structure comprises 462 residues: A-type ATP synthase subunit B (462 aa).

It belongs to the ATPase alpha/beta chains family. As to quaternary structure, has multiple subunits with at least A(3), B(3), C, D, E, F, H, I and proteolipid K(x).

Its subcellular location is the cell membrane. Its function is as follows. Component of the A-type ATP synthase that produces ATP from ADP in the presence of a proton gradient across the membrane. The B chain is a regulatory subunit. The sequence is that of A-type ATP synthase subunit B from Methanococcus maripaludis (strain DSM 14266 / JCM 13030 / NBRC 101832 / S2 / LL).